A 387-amino-acid polypeptide reads, in one-letter code: Glutamyl-tRNA reductase 1 (387 aa).

Residues 45-48 (TCNR), serine 96, 101-103 (ETD), and glutamine 107 contribute to the substrate site. The Nucleophile role is filled by cysteine 46. 175–180 (GAGSVG) is a binding site for NADP(+).

Belongs to the glutamyl-tRNA reductase family. In terms of assembly, homodimer.

The catalysed reaction is (S)-4-amino-5-oxopentanoate + tRNA(Glu) + NADP(+) = L-glutamyl-tRNA(Glu) + NADPH + H(+). The protein operates within porphyrin-containing compound metabolism; protoporphyrin-IX biosynthesis; 5-aminolevulinate from L-glutamyl-tRNA(Glu): step 1/2. Its function is as follows. Catalyzes the NADPH-dependent reduction of glutamyl-tRNA(Glu) to glutamate 1-semialdehyde (GSA). The polypeptide is Glutamyl-tRNA reductase 1 (Pyrobaculum arsenaticum (strain DSM 13514 / JCM 11321 / PZ6)).